We begin with the raw amino-acid sequence, 320 residues long: MHVASALMVEQKGSEAAASSPDVLRAWATQYHMPSESSDAARPALKHAYKPPASDAKGITMALTIIGTWTAVFLHAIFQIRLPTSMDQLHWLPVSEATAQLLGGSSSLLHIAAVFIVLEFLYTGLFITTHDAMHGTIALRNRQLNDLLGNICISLYAWFDYSMLHRKHWEHHNHTGEVGKDPDFHKGNPGLVPWFASFMSSYMSLWQFARLAWWAVVMQMLGAPMANLLVFMAAAPILSAFRLFYFGTYLPHKPGPGPAAGSQVMAWFRAKTSEASDVMSFLTCYHFDLHWEHHRWPFAPWWQLPHCRRLSGRGLVPALA.

The enzyme catalyses echinenone + 2 AH2 + 2 O2 = canthaxanthin + 2 A + 3 H2O. It catalyses the reaction all-trans-beta-carotene + 2 AH2 + 2 O2 = echinenone + 2 A + 3 H2O. It functions in the pathway carotenoid biosynthesis. In terms of biological role, involved in the biosynthesis of ketocarotenoids which are powerful anti-oxidative molecules. Catalyzes the conversion of beta-carotene to canthaxanthin via echinenone. The protein is Beta-carotene 4-ketolase 3 of Haematococcus lacustris (Green alga).